Here is a 97-residue protein sequence, read N- to C-terminus: Aspartyl/glutamyl-tRNA(Asn/Gln) amidotransferase subunit C (97 aa).

This sequence belongs to the GatC family. As to quaternary structure, heterotrimer of A, B and C subunits.

The enzyme catalyses L-glutamyl-tRNA(Gln) + L-glutamine + ATP + H2O = L-glutaminyl-tRNA(Gln) + L-glutamate + ADP + phosphate + H(+). The catalysed reaction is L-aspartyl-tRNA(Asn) + L-glutamine + ATP + H2O = L-asparaginyl-tRNA(Asn) + L-glutamate + ADP + phosphate + 2 H(+). Allows the formation of correctly charged Asn-tRNA(Asn) or Gln-tRNA(Gln) through the transamidation of misacylated Asp-tRNA(Asn) or Glu-tRNA(Gln) in organisms which lack either or both of asparaginyl-tRNA or glutaminyl-tRNA synthetases. The reaction takes place in the presence of glutamine and ATP through an activated phospho-Asp-tRNA(Asn) or phospho-Glu-tRNA(Gln). The chain is Aspartyl/glutamyl-tRNA(Asn/Gln) amidotransferase subunit C from Clostridium botulinum (strain Eklund 17B / Type B).